The sequence spans 326 residues: ATP synthase subunit b 2 (326 aa).

Residues 2-22 traverse the membrane as a helical segment; the sequence is LIDWFTVVAQALNFLILVWLL. Composition is skewed to basic and acidic residues over residues 275–298 and 306–326; these read QQGR…RKEN and PPPE…IGSP. Residues 275–326 form a disordered region; it reads QQGRKEGRAVQNWDKAESEIRKENLSPAKTEPPPEAKAKPKPEEPKPEIGSP.

Belongs to the ATPase B chain family. In terms of assembly, F-type ATPases have 2 components, F(1) - the catalytic core - and F(0) - the membrane proton channel. F(1) has five subunits: alpha(3), beta(3), gamma(1), delta(1), epsilon(1). F(0) has three main subunits: a(1), b(2) and c(10-14). The alpha and beta chains form an alternating ring which encloses part of the gamma chain. F(1) is attached to F(0) by a central stalk formed by the gamma and epsilon chains, while a peripheral stalk is formed by the delta and b chains.

The protein localises to the cell inner membrane. F(1)F(0) ATP synthase produces ATP from ADP in the presence of a proton or sodium gradient. F-type ATPases consist of two structural domains, F(1) containing the extramembraneous catalytic core and F(0) containing the membrane proton channel, linked together by a central stalk and a peripheral stalk. During catalysis, ATP synthesis in the catalytic domain of F(1) is coupled via a rotary mechanism of the central stalk subunits to proton translocation. In terms of biological role, component of the F(0) channel, it forms part of the peripheral stalk, linking F(1) to F(0). The chain is ATP synthase subunit b 2 from Albidiferax ferrireducens (strain ATCC BAA-621 / DSM 15236 / T118) (Rhodoferax ferrireducens).